Here is a 521-residue protein sequence, read N- to C-terminus: GMP synthase [glutamine-hydrolyzing] (521 aa).

The 193-residue stretch at 5-197 (KILILDFGSQ…VLDICGAQPG (193 aa)) folds into the Glutamine amidotransferase type-1 domain. Residue Cys-81 is the Nucleophile of the active site. Active-site residues include His-171 and Glu-173. Residues 198–390 (WTMPNYIEEA…LGLPREMVYR (193 aa)) enclose the GMPS ATP-PPase domain. Residue 225–231 (SGGVDSS) coordinates ATP.

As to quaternary structure, homodimer.

The enzyme catalyses XMP + L-glutamine + ATP + H2O = GMP + L-glutamate + AMP + diphosphate + 2 H(+). It participates in purine metabolism; GMP biosynthesis; GMP from XMP (L-Gln route): step 1/1. In terms of biological role, catalyzes the synthesis of GMP from XMP. The chain is GMP synthase [glutamine-hydrolyzing] from Neisseria gonorrhoeae (strain ATCC 700825 / FA 1090).